The following is a 252-amino-acid chain: Chlorophyll a-b binding protein P4, chloroplastic (252 aa).

A chlorophyll b-binding site is contributed by Trp-56. Chlorophyll a contacts are provided by Phe-76 and Glu-95. Position 100 (Arg-100) interacts with chlorophyll b. The next 2 helical transmembrane spans lie at Trp-101–Ile-121 and Tyr-134–Ile-154. The chlorophyll b site is built by Ser-137, Val-143, Glu-153, and Arg-156. The chlorophyll a site is built by Lys-203, Glu-204, Asn-207, Arg-209, Gln-221, and His-236.

Belongs to the light-harvesting chlorophyll a/b-binding (LHC) protein family. As to quaternary structure, the LHC complex consists of chlorophyll a-b binding proteins. Binds at least 14 chlorophylls (8 Chl-a and 6 Chl-b) and carotenoids such as lutein and neoxanthin. serves as cofactor. Post-translationally, photoregulated by reversible phosphorylation of its threonine residues.

The protein resides in the plastid. Its subcellular location is the chloroplast thylakoid membrane. Its function is as follows. The light-harvesting complex (LHC) functions as a light receptor, it captures and delivers excitation energy to photosystems with which it is closely associated. In terms of biological role, may channel protons produced in the catalytic Mn center of water oxidation into the thylakoid lumen. The chain is Chlorophyll a-b binding protein P4, chloroplastic from Pisum sativum (Garden pea).